A 359-amino-acid chain; its full sequence is tRNA N6-adenosine threonylcarbamoyltransferase (359 aa).

H121 and H125 together coordinate Fe cation. Substrate contacts are provided by residues 143 to 147 (LVSGG), D176, G189, and N286. Fe cation is bound at residue D311.

It belongs to the KAE1 / TsaD family. Requires Fe(2+) as cofactor.

It is found in the cytoplasm. It catalyses the reaction L-threonylcarbamoyladenylate + adenosine(37) in tRNA = N(6)-L-threonylcarbamoyladenosine(37) in tRNA + AMP + H(+). Required for the formation of a threonylcarbamoyl group on adenosine at position 37 (t(6)A37) in tRNAs that read codons beginning with adenine. Is involved in the transfer of the threonylcarbamoyl moiety of threonylcarbamoyl-AMP (TC-AMP) to the N6 group of A37, together with TsaE and TsaB. TsaD likely plays a direct catalytic role in this reaction. This is tRNA N6-adenosine threonylcarbamoyltransferase from Jannaschia sp. (strain CCS1).